A 228-amino-acid polypeptide reads, in one-letter code: 7-cyano-7-deazaguanine synthase (228 aa).

Residue 9 to 19 (LSGGPDSTTVL) participates in ATP binding. The Zn(2+) site is built by C193, C203, C206, and C209.

It belongs to the QueC family. Requires Zn(2+) as cofactor.

The enzyme catalyses 7-carboxy-7-deazaguanine + NH4(+) + ATP = 7-cyano-7-deazaguanine + ADP + phosphate + H2O + H(+). The protein operates within purine metabolism; 7-cyano-7-deazaguanine biosynthesis. In terms of biological role, catalyzes the ATP-dependent conversion of 7-carboxy-7-deazaguanine (CDG) to 7-cyano-7-deazaguanine (preQ(0)). The chain is 7-cyano-7-deazaguanine synthase from Rickettsia africae (strain ESF-5).